A 334-amino-acid chain; its full sequence is Pantothenate synthetase (334 aa).

34–41 (MGALHEGH) lines the ATP pocket. The Proton donor role is filled by His-41. Gln-71 contributes to the (R)-pantoate binding site. Position 71 (Gln-71) interacts with beta-alanine. 158 to 161 (GQKD) is a binding site for ATP. Gln-164 contacts (R)-pantoate. ATP is bound by residues Val-187 and 195-198 (LSSR). A disordered region spans residues 288 to 334 (PLMLGTRGPAGEASPPNRERSEPGSAEQNKSPGEARTTPSGTSEASE). The span at 313 to 334 (AEQNKSPGEARTTPSGTSEASE) shows a compositional bias: polar residues.

It belongs to the pantothenate synthetase family. As to quaternary structure, homodimer.

Its subcellular location is the cytoplasm. It catalyses the reaction (R)-pantoate + beta-alanine + ATP = (R)-pantothenate + AMP + diphosphate + H(+). The protein operates within cofactor biosynthesis; (R)-pantothenate biosynthesis; (R)-pantothenate from (R)-pantoate and beta-alanine: step 1/1. In terms of biological role, catalyzes the condensation of pantoate with beta-alanine in an ATP-dependent reaction via a pantoyl-adenylate intermediate. This chain is Pantothenate synthetase, found in Nocardioides sp. (strain ATCC BAA-499 / JS614).